The sequence spans 126 residues: Holo-[acyl-carrier-protein] synthase (126 aa).

The Mg(2+) site is built by D9 and E58.

It belongs to the P-Pant transferase superfamily. AcpS family. Mg(2+) is required as a cofactor.

The protein localises to the cytoplasm. The enzyme catalyses apo-[ACP] + CoA = holo-[ACP] + adenosine 3',5'-bisphosphate + H(+). Transfers the 4'-phosphopantetheine moiety from coenzyme A to a Ser of acyl-carrier-protein. The sequence is that of Holo-[acyl-carrier-protein] synthase from Erwinia tasmaniensis (strain DSM 17950 / CFBP 7177 / CIP 109463 / NCPPB 4357 / Et1/99).